Here is a 947-residue protein sequence, read N- to C-terminus: Protein translocase subunit SecA 1 (947 aa).

ATP contacts are provided by residues Gln-87, 105-109 (GEGKT), and Asp-525. A disordered region spans residues 907 to 937 (DDADKAARDPNRPETWGKVGRNEDCPCNSGK). Over residues 908–918 (DADKAARDPNR) the composition is skewed to basic and acidic residues. 4 residues coordinate Zn(2+): Cys-931, Cys-933, Cys-942, and His-943.

It belongs to the SecA family. As to quaternary structure, monomer and homodimer. Part of the essential Sec protein translocation apparatus which comprises SecA, SecYEG and auxiliary proteins SecDF-YajC and YidC. Zn(2+) is required as a cofactor.

It is found in the cell inner membrane. The protein resides in the cytoplasm. It catalyses the reaction ATP + H2O + cellular proteinSide 1 = ADP + phosphate + cellular proteinSide 2.. Part of the Sec protein translocase complex. Interacts with the SecYEG preprotein conducting channel. Has a central role in coupling the hydrolysis of ATP to the transfer of proteins into and across the cell membrane, serving both as a receptor for the preprotein-SecB complex and as an ATP-driven molecular motor driving the stepwise translocation of polypeptide chains across the membrane. The polypeptide is Protein translocase subunit SecA 1 (Rhodopseudomonas palustris (strain BisA53)).